Consider the following 750-residue polypeptide: Retron Eco8 OLD nuclease (750 aa).

Residues 1 to 173 are ATPase domain N-terminus; it reads MTIESIRVKN…IDLYDWNPIW (173 aa). 33 to 37 contributes to the ATP binding site; that stretch reads NVGKS. A dimerization domain region spans residues 174–260; the sequence is KLISNLNSFN…TQSDGTNSNK (87 aa). An ATPase domain C-terminus region spans residues 261 to 390; sequence FLETLLHLLI…FSDNEARLFF (130 aa). Residues 391–704 form a toprim domain region; the sequence is SEYIVFVEGA…SGWVTTFLNY (314 aa). The a divalent metal cation site is built by Glu-398, Glu-402, Asp-450, Asp-452, Ser-623, and Glu-641.

This sequence belongs to the class 1 OLD nuclease family. As to quaternary structure, homodimer. It depends on a divalent metal cation as a cofactor.

Functionally, probable nuclease member of antiviral defense system retron Eco8, composed of an reverse transcriptase (RT), this nuclease and a non-coding RNA (ncRNA) encoded between them. Expression of retron Eco8 confers protection against bacteriophages T4, T6, T7 and SECphi4, SECphi6 and SECphi18. At multiplicity of infection (MOI) of 0.02 cultures slow growth when infected with SECphi4 but do not collapse, at MOI 2 cultures collapse. When the retron is cloned in another E.coli strain synthesizes msDNA (a branched RNA linked by a 2',5'-phosphodiester bond to a single-stranded DNA). The retron transcript serves as primer and template to the reaction, and codes for the RT. This Escherichia coli protein is Retron Eco8 OLD nuclease.